The primary structure comprises 405 residues: tRNA N6-adenosine threonylcarbamoyltransferase, mitochondrial (405 aa).

The N-terminal 19 residues, 1–19 (MAKYISNLSRIAVVRGRVS), are a transit peptide targeting the mitochondrion. A divalent metal cation contacts are provided by His138 and His142. Residues 160-164 (LISGG), Asp193, Gly213, Glu217, 320-321 (SN), and Thr348 contribute to the substrate site. A divalent metal cation is bound at residue Asp349.

The protein belongs to the KAE1 / TsaD family. Monomer. Requires a divalent metal cation as cofactor.

The protein resides in the mitochondrion. It carries out the reaction L-threonylcarbamoyladenylate + adenosine(37) in tRNA = N(6)-L-threonylcarbamoyladenosine(37) in tRNA + AMP + H(+). Its function is as follows. Required for the formation of a threonylcarbamoyl group on adenosine at position 37 (t(6)A37) in mitochondrial tRNAs that read codons beginning with adenine. Probably involved in the transfer of the threonylcarbamoyl moiety of threonylcarbamoyl-AMP (TC-AMP) to the N6 group of A37. Involved in mitochondrial genome maintenance. The chain is tRNA N6-adenosine threonylcarbamoyltransferase, mitochondrial from Xenopus tropicalis (Western clawed frog).